A 320-amino-acid chain; its full sequence is ATP synthase gamma chain (320 aa).

It belongs to the ATPase gamma chain family. As to quaternary structure, F-type ATPases have 2 components, CF(1) - the catalytic core - and CF(0) - the membrane proton channel. CF(1) has five subunits: alpha(3), beta(3), gamma(1), delta(1), epsilon(1). CF(0) has three main subunits: a, b and c.

It localises to the cell membrane. Functionally, produces ATP from ADP in the presence of a proton gradient across the membrane. The gamma chain is believed to be important in regulating ATPase activity and the flow of protons through the CF(0) complex. This Lactobacillus delbrueckii subsp. bulgaricus (strain ATCC 11842 / DSM 20081 / BCRC 10696 / JCM 1002 / NBRC 13953 / NCIMB 11778 / NCTC 12712 / WDCM 00102 / Lb 14) protein is ATP synthase gamma chain.